Consider the following 54-residue polypeptide: Large ribosomal subunit protein bL33A (54 aa).

The protein belongs to the bacterial ribosomal protein bL33 family.

In Mycobacteroides abscessus (strain ATCC 19977 / DSM 44196 / CCUG 20993 / CIP 104536 / JCM 13569 / NCTC 13031 / TMC 1543 / L948) (Mycobacterium abscessus), this protein is Large ribosomal subunit protein bL33A.